We begin with the raw amino-acid sequence, 386 residues long: Succinate--CoA ligase [ADP-forming] subunit beta (386 aa).

ATP-binding residues include K46, E99, A102, and E107. Mg(2+) contacts are provided by N199 and D213. Substrate contacts are provided by residues N264 and 321–323 (GIM).

This sequence belongs to the succinate/malate CoA ligase beta subunit family. As to quaternary structure, heterotetramer of two alpha and two beta subunits. Mg(2+) is required as a cofactor.

The enzyme catalyses succinate + ATP + CoA = succinyl-CoA + ADP + phosphate. It carries out the reaction GTP + succinate + CoA = succinyl-CoA + GDP + phosphate. It participates in carbohydrate metabolism; tricarboxylic acid cycle; succinate from succinyl-CoA (ligase route): step 1/1. Its function is as follows. Succinyl-CoA synthetase functions in the citric acid cycle (TCA), coupling the hydrolysis of succinyl-CoA to the synthesis of either ATP or GTP and thus represents the only step of substrate-level phosphorylation in the TCA. The beta subunit provides nucleotide specificity of the enzyme and binds the substrate succinate, while the binding sites for coenzyme A and phosphate are found in the alpha subunit. The sequence is that of Succinate--CoA ligase [ADP-forming] subunit beta from Orientia tsutsugamushi (strain Ikeda) (Rickettsia tsutsugamushi).